The primary structure comprises 156 residues: RNA polymerase sigma factor SigS (156 aa).

A Polymerase core binding motif is present at residues 29-44 (EYYQLLLIKMWQLSQI). Positions 126–145 (QFEIAEIMSLSLSTIKLIKM) form a DNA-binding region, H-T-H motif.

It belongs to the sigma-70 factor family.

In terms of biological role, sigma factors are initiation factors that promote the attachment of RNA polymerase to specific initiation sites and are then released. Sigma-S contributes to the protection against external stress, thus playing a role in cellular fitness and survival. This chain is RNA polymerase sigma factor SigS (sigS), found in Staphylococcus aureus (strain Mu50 / ATCC 700699).